The sequence spans 236 residues: 2,3,4,5-tetrahydropyridine-2,6-dicarboxylate N-acetyltransferase (236 aa).

It belongs to the transferase hexapeptide repeat family. DapH subfamily.

The catalysed reaction is (S)-2,3,4,5-tetrahydrodipicolinate + acetyl-CoA + H2O = L-2-acetamido-6-oxoheptanedioate + CoA. It participates in amino-acid biosynthesis; L-lysine biosynthesis via DAP pathway; LL-2,6-diaminopimelate from (S)-tetrahydrodipicolinate (acetylase route): step 1/3. Functionally, catalyzes the transfer of an acetyl group from acetyl-CoA to tetrahydrodipicolinate. The sequence is that of 2,3,4,5-tetrahydropyridine-2,6-dicarboxylate N-acetyltransferase from Geobacillus sp. (strain WCH70).